Here is a 585-residue protein sequence, read N- to C-terminus: Butyrophilin subfamily 3 member A3 (585 aa).

A signal peptide spans 1–29; sequence MKMASSLACLLLNFHVSVFLVQLLTPCSA. Ig-like V-type domains follow at residues 30-139 and 145-236; these read QFSV…KALV and ALGS…ASIS. Topologically, residues 30–248 are extracellular; that stretch reads QFSVLGPSGP…DPFFTSAQPW (219 aa). Intrachain disulfides connect Cys-52-Cys-126 and Cys-166-Cys-220. Asn-115 is a glycosylation site (N-linked (GlcNAc...) asparagine). The chain crosses the membrane as a helical span at residues 249 to 269; sequence IAALAGTLPISLLLLAGASYF. Topologically, residues 270 to 585 are cytoplasmic; the sequence is LWRQQKEKIA…KPQACTEALY (316 aa). Residues 322–518 enclose the B30.2/SPRY domain; the sequence is RGEKSLAYHE…LTICPTPKEV (197 aa). The segment at 560–585 is disordered; sequence AGAEGVSPSTTTSQNHKPQACTEALY. Polar residues predominate over residues 566–576; that stretch reads SPSTTTSQNHK.

It belongs to the immunoglobulin superfamily. BTN/MOG family.

The protein localises to the membrane. The sequence is that of Butyrophilin subfamily 3 member A3 (BTN3A3) from Pongo abelii (Sumatran orangutan).